Reading from the N-terminus, the 1106-residue chain is Solute carrier family 12 member 7 (1106 aa).

Residues 1–143 (MVYTALTWQR…PRESKAPCMG (143 aa)) lie on the Cytoplasmic side of the membrane. Residues 17 to 83 (GLVPSHLPQE…SPFIGSAAAD (67 aa)) form a disordered region. Phosphoserine occurs at positions 74 and 86. The chain crosses the membrane as a discontinuously helical span at residues 144–166 (TFIGVYLPCLQNILGVILFLRLT). The K(+) site is built by asparagine 155 and isoleucine 156. Position 159 (valine 159) interacts with chloride. Over 167–173 (WIVGAAG) the chain is Extracellular. Residues 174 to 196 (VLESFLVVSMCCTCTMLTAVSMS) form a helical membrane-spanning segment. At 197 to 220 (AIATNGVVPAGGSYYMISRSLGPE) the chain is on the cytoplasmic side. The helical transmembrane segment at 221 to 249 (FGGAVGLCFYLGTTFAGAMYILGTIEIFL) threads the bilayer. The Extracellular segment spans residues 250–273 (TYISPGAAVFQAETPEGEAAALLH). A run of 2 helical transmembrane segments spans residues 274 to 295 (NMRV…VGVK) and 296 to 324 (YVNK…KTAF). Residues 325-443 (DPPDIPVCLL…PYVLSDITTY (119 aa)) lie on the Extracellular side of the membrane. N-linked (GlcNAc...) asparagine glycosylation is found at asparagine 336, asparagine 355, and asparagine 384. The chain crosses the membrane as a helical span at residues 444–464 (FTVLVGIYFPSVTGIMAGSNR). K(+)-binding residues include proline 453 and threonine 456. Position 453 (proline 453) interacts with chloride. Chloride contacts are provided by glycine 457 and isoleucine 458. Residues 465 to 474 (SGDLKDAQKS) lie on the Cytoplasmic side of the membrane. The chain crosses the membrane as a helical span at residues 475–497 (IPTGTILAIVTTSFIYLSCIVLF). The Extracellular segment spans residues 498-528 (GACIEGVVLRDKFGEALQGNLVIGMLAWPSP). A helical transmembrane segment spans residues 529–555 (WVIVIGSFFSTCGAGLQSLTGAPRLLQ). At 556–578 (AIARDGIVPFLQVFGHGKANGEP) the chain is on the cytoplasmic side. 2 helical membrane passes run 579 to 597 (TWAL…LIAS) and 598 to 622 (LDSV…ACAV). Residue tyrosine 613 coordinates chloride. Topologically, residues 623–636 (QTLLRTPNWRPRFK) are cytoplasmic. Transmembrane regions (helical) follow at residues 637–659 (YYHW…ICSW) and 660–675 (YYAL…IYKY). Topologically, residues 676–1106 (IEYRGAEKEW…GGREVITIYS (431 aa)) are cytoplasmic. The interval 688–704 (GIRGLSLNAARYALLRV) is scissor helix. The segment at 980 to 999 (RNTASHTAASRAQAPPTPDK) is disordered. Phosphothreonine is present on residues threonine 996 and threonine 1003.

This sequence belongs to the SLC12A transporter family. K/Cl co-transporter subfamily. In terms of assembly, homodimer; adopts a domain-swap conformation at the scissor helices connecting the transmembrane domain and C-terminal domain. Heterodimer with K-Cl cotransporter SLC12A5. In terms of tissue distribution, widely expressed. Higher levels in heart, kidney and lung (at protein level).

The protein localises to the cell membrane. It catalyses the reaction K(+)(in) + chloride(in) = K(+)(out) + chloride(out). Activated by N-ethylmaleimide (NEM). Inhibited by furosemide, DIDS and bumetanide. The inhibition is much stronger in the presence of 50 mM K(+) in the uptake medium. Inhibited by DIOA. Inhibited by WNK3. Mediates electroneutral potassium-chloride cotransport when activated by cell swelling. May mediate K(+) uptake into Deiters' cells in the cochlea and contribute to K(+) recycling in the inner ear. Important for the survival of cochlear outer and inner hair cells and the maintenance of the organ of Corti. May be required for basolateral Cl(-) extrusion in the kidney and contribute to renal acidification. This chain is Solute carrier family 12 member 7, found in Oryctolagus cuniculus (Rabbit).